The primary structure comprises 137 residues: DNA-directed RNA polymerase subunit omega (137 aa).

Residues 78 to 137 are disordered; that stretch reads DEPEPEAVPLLSSSPAAAAVAPQAASGDDNDIQFDRMSEEDLLRGLENLAPPTETEDEGD. The segment covering 84–103 has biased composition (low complexity); that stretch reads AVPLLSSSPAAAAVAPQAAS. Over residues 110–121 the composition is skewed to basic and acidic residues; sequence QFDRMSEEDLLR.

The protein belongs to the RNA polymerase subunit omega family. In terms of assembly, the RNAP catalytic core consists of 2 alpha, 1 beta, 1 beta' and 1 omega subunit. When a sigma factor is associated with the core the holoenzyme is formed, which can initiate transcription.

It catalyses the reaction RNA(n) + a ribonucleoside 5'-triphosphate = RNA(n+1) + diphosphate. In terms of biological role, promotes RNA polymerase assembly. Latches the N- and C-terminal regions of the beta' subunit thereby facilitating its interaction with the beta and alpha subunits. In Methylobacterium sp. (strain 4-46), this protein is DNA-directed RNA polymerase subunit omega.